The primary structure comprises 468 residues: Methionine aminopeptidase 2 (468 aa).

Over residues 1-10 (MGSKTFEGEG) the composition is skewed to basic and acidic residues. The tract at residues 1–106 (MGSKTFEGEG…PPRVPLDDLF (106 aa)) is disordered. Positions 16-25 (DPSNSTSPNS) are enriched in polar residues. The span at 31–40 (RGAHLSRDGD) shows a compositional bias: basic and acidic residues. The segment covering 46 to 56 (GDGDDGADGDE) has biased composition (acidic residues). A compositionally biased stretch (polar residues) spans 61 to 75 (VTTTPLTEQQPSSET). Over residues 78-90 (KKKKRRKPKKKIS) the composition is skewed to basic residues. H219 is a substrate binding site. Positions 240, 251, and 320 each coordinate a divalent metal cation. H328 contributes to the substrate binding site. A divalent metal cation-binding residues include E353 and E449.

The protein belongs to the peptidase M24A family. Methionine aminopeptidase eukaryotic type 2 subfamily. Co(2+) serves as cofactor. The cofactor is Zn(2+). Mn(2+) is required as a cofactor. It depends on Fe(2+) as a cofactor.

The protein resides in the cytoplasm. The catalysed reaction is Release of N-terminal amino acids, preferentially methionine, from peptides and arylamides.. Functionally, cotranslationally removes the N-terminal methionine from nascent proteins. The N-terminal methionine is often cleaved when the second residue in the primary sequence is small and uncharged (Met-Ala-, Cys, Gly, Pro, Ser, Thr, or Val). The chain is Methionine aminopeptidase 2 from Aspergillus oryzae (strain ATCC 42149 / RIB 40) (Yellow koji mold).